The chain runs to 699 residues: Endogenous retrovirus group K member 8 Env polyprotein (699 aa).

Residues 1-47 form a disordered region; sequence MNPSEMQRKAPPRRRRHRNRAPLTHKMNKMVTSEEQMKLPSTKKAEP. The N-terminal stretch at 1–89 is a signal peptide; that stretch reads MNPSEMQRKA…ALMIVSMVVS (89 aa). The span at 10 to 20 shows a compositional bias: basic residues; it reads APPRRRRHRNR. Over 90 to 632 the chain is Extracellular; that stretch reads LPMPAGAAVA…NLNPVTWVKT (543 aa). Residues Asn100, Asn128, Asn153, Asn274, Asn355, Asn372, and Asn461 are each glycosylated (N-linked (GlcNAc...) asparagine). The segment at 466–486 is fusion peptide; the sequence is FIFTLIAVIMGLIAVTATAAV. Residues Asn507, Asn554, Asn566, and Asn585 are each glycosylated (N-linked (GlcNAc...) asparagine). Residues 633 to 653 traverse the membrane as a helical segment; sequence IGSTTIINLILILVCLFCLLL. At 654 to 699 the chain is on the cytoplasmic side; the sequence is VCRCTQQLRRDSDHRERAMMTMAVLSKRKGGNVGKSKRDQIVTVSV.

This sequence belongs to the beta type-B retroviral envelope protein family. HERV class-II K(HML-2) env subfamily. In terms of assembly, the surface (SU) and transmembrane (TM) proteins form a heterodimer. SU and TM are attached by noncovalent interactions or by a labile interchain disulfide bond. Specific enzymatic cleavages in vivo yield the mature SU and TM proteins.

Its subcellular location is the cell membrane. The protein localises to the virion. Functionally, retroviral envelope proteins mediate receptor recognition and membrane fusion during early infection. Endogenous envelope proteins may have kept, lost or modified their original function during evolution. This endogenous envelope protein has lost its original fusogenic properties. In terms of biological role, SU mediates receptor recognition. TM anchors the envelope heterodimer to the viral membrane through one transmembrane domain. The other hydrophobic domain, called fusion peptide, mediates fusion of the viral membrane with the target cell membrane. This Homo sapiens (Human) protein is Endogenous retrovirus group K member 8 Env polyprotein (ERVK-8).